Reading from the N-terminus, the 292-residue chain is Tumor necrosis factor receptor type 1-associated DEATH domain protein (292 aa).

The Nuclear export signal signature appears at 148 to 164 (LRDDEIAELDQQLQSQA). The Death domain occupies 199-289 (AAGDLQRFSN…SLAENILDIQ (91 aa)). The short motif at 215–228 (RKVGRALGKNCRAL) is the Nuclear localization signal element.

Heterodimer with tnfrsf1a.

It is found in the nucleus. The protein localises to the cytoplasm. It localises to the cytoskeleton. Functionally, adapter molecule for tnfrsf1a that specifically associates with the cytoplasmic domain of activated tnfrsf1a mediating its interaction with fadd. The sequence is that of Tumor necrosis factor receptor type 1-associated DEATH domain protein (tradd) from Oncorhynchus mykiss (Rainbow trout).